The primary structure comprises 585 residues: Mitochondrial translation ATP-dependent RNA helicase mrh5 (585 aa).

Residues 87–117 (PKFHELPLNQNILDGLSTNFAEYKNSTPLQQ) carry the Q motif motif. One can recognise a Helicase ATP-binding domain in the interval 121–351 (NALMKSGVSF…SRYITDQLGI (231 aa)). 134–141 (GWNGSGKS) is a binding site for ATP. Residues 261-264 (DESD) carry the DEAD box motif. The Helicase C-terminal domain maps to 390 to 584 (NLPYEFVRFN…PKSYEFDDEH (195 aa)).

The protein belongs to the DEAD box helicase family. As to quaternary structure, component of the MRH5C complex, composed of mrh5, ppr4, mtf2, and sls1. Proteins mtf2 and sls1 form a subcomplex that serves as a scaffold to bring mrh5 and ppr4 together. The MRH5C complex associates with the small subunit of the mitochondrial ribosome.

Its subcellular location is the mitochondrion. The catalysed reaction is ATP + H2O = ADP + phosphate + H(+). In terms of biological role, translation activation factor that as part of the MRH5C complex specifically recruits cox1 mRNA to the mitochondrial ribosome for translation initiation. This Schizosaccharomyces pombe (strain 972 / ATCC 24843) (Fission yeast) protein is Mitochondrial translation ATP-dependent RNA helicase mrh5.